We begin with the raw amino-acid sequence, 284 residues long: Cystinosin homolog (284 aa).

Transmembrane regions (helical) follow at residues Ala-3–Phe-23, Ile-37–Phe-57, Ile-86–Tyr-106, Leu-116–Phe-136, Val-139–Ile-159, Asn-181–Ala-201, and Leu-216–Leu-236. Residues Leu-4–Glu-70 enclose the PQ-loop 1 domain. The PQ-loop 2 domain maps to Leu-154–Ile-208. The tract at residues Asn-247 to Pro-269 is disordered.

It belongs to the cystinosin family.

The protein resides in the lysosome membrane. It catalyses the reaction L-cystine(out) + H(+)(out) = L-cystine(in) + H(+)(in). Cystine/H(+) symporter that mediates export of cystine, the oxidized dimer of cysteine, from lysosomes. The polypeptide is Cystinosin homolog (ctns) (Dictyostelium discoideum (Social amoeba)).